A 362-amino-acid chain; its full sequence is tRNA-specific 2-thiouridylase MnmA 3 (362 aa).

ATP-binding positions include 11-18 and Met-37; that span reads GMSGGIDS. Cys-91 acts as the Nucleophile in catalysis. Cys-91 and Cys-188 are oxidised to a cystine. Gly-115 serves as a coordination point for ATP. Residues 137–139 are interaction with tRNA; the sequence is KDQ. Cys-188 functions as the Cysteine persulfide intermediate in the catalytic mechanism. Positions 296-297 are interaction with tRNA; sequence RY.

Belongs to the MnmA/TRMU family.

Its subcellular location is the cytoplasm. It catalyses the reaction S-sulfanyl-L-cysteinyl-[protein] + uridine(34) in tRNA + AH2 + ATP = 2-thiouridine(34) in tRNA + L-cysteinyl-[protein] + A + AMP + diphosphate + H(+). Catalyzes the 2-thiolation of uridine at the wobble position (U34) of tRNA, leading to the formation of s(2)U34. The sequence is that of tRNA-specific 2-thiouridylase MnmA 3 from Bacteroides fragilis (strain ATCC 25285 / DSM 2151 / CCUG 4856 / JCM 11019 / LMG 10263 / NCTC 9343 / Onslow / VPI 2553 / EN-2).